The following is a 409-amino-acid chain: uncharacterized protein (409 aa).

This is an uncharacterized protein from Mycoplasma genitalium (strain ATCC 33530 / DSM 19775 / NCTC 10195 / G37) (Mycoplasmoides genitalium).